We begin with the raw amino-acid sequence, 378 residues long: Ribosomal RNA large subunit methyltransferase G (378 aa).

It belongs to the methyltransferase superfamily. RlmG family.

The protein resides in the cytoplasm. The catalysed reaction is guanosine(1835) in 23S rRNA + S-adenosyl-L-methionine = N(2)-methylguanosine(1835) in 23S rRNA + S-adenosyl-L-homocysteine + H(+). Functionally, specifically methylates the guanine in position 1835 (m2G1835) of 23S rRNA. The protein is Ribosomal RNA large subunit methyltransferase G of Shigella flexneri.